The chain runs to 361 residues: Heme A synthase (361 aa).

The next 8 membrane-spanning stretches (helical) occupy residues 22 to 42 (LWVR…VLVG), 109 to 129 (LLAR…WVTG), 139 to 159 (LLGI…MVAS), 175 to 195 (HLTI…GLAP), 208 to 228 (FAFW…LVAG), 269 to 289 (FVHR…AIAT), 303 to 323 (VLLF…LLMV), and 324 to 344 (VPMD…GFAT). His-271 is a heme binding site. Residue His-332 coordinates heme.

It belongs to the COX15/CtaA family. Type 2 subfamily. As to quaternary structure, interacts with CtaB. Heme b serves as cofactor.

The protein resides in the cell membrane. The catalysed reaction is Fe(II)-heme o + 2 A + H2O = Fe(II)-heme a + 2 AH2. It participates in porphyrin-containing compound metabolism; heme A biosynthesis; heme A from heme O: step 1/1. Its function is as follows. Catalyzes the conversion of heme O to heme A by two successive hydroxylations of the methyl group at C8. The first hydroxylation forms heme I, the second hydroxylation results in an unstable dihydroxymethyl group, which spontaneously dehydrates, resulting in the formyl group of heme A. This Chelativorans sp. (strain BNC1) protein is Heme A synthase.